A 323-amino-acid polypeptide reads, in one-letter code: Probable cell division protein WhiA (323 aa).

The segment at residues 275-309 (TLKELGEMLTTGQVSKSGINHRLRKLDQIAERLRS) is a DNA-binding region (H-T-H motif).

Belongs to the WhiA family.

Functionally, involved in cell division and chromosome segregation. This is Probable cell division protein WhiA from Listeria welshimeri serovar 6b (strain ATCC 35897 / DSM 20650 / CCUG 15529 / CIP 8149 / NCTC 11857 / SLCC 5334 / V8).